Consider the following 160-residue polypeptide: 6,7-dimethyl-8-ribityllumazine synthase (160 aa).

Residues F22, 57-59 (AVE), and 81-83 (AVI) each bind 5-amino-6-(D-ribitylamino)uracil. 86–87 (GT) lines the (2S)-2-hydroxy-3-oxobutyl phosphate pocket. The active-site Proton donor is the H89. Residue F114 coordinates 5-amino-6-(D-ribitylamino)uracil. A (2S)-2-hydroxy-3-oxobutyl phosphate-binding site is contributed by R128.

Belongs to the DMRL synthase family. Forms an icosahedral capsid composed of 60 subunits, arranged as a dodecamer of pentamers.

The enzyme catalyses (2S)-2-hydroxy-3-oxobutyl phosphate + 5-amino-6-(D-ribitylamino)uracil = 6,7-dimethyl-8-(1-D-ribityl)lumazine + phosphate + 2 H2O + H(+). Its pathway is cofactor biosynthesis; riboflavin biosynthesis; riboflavin from 2-hydroxy-3-oxobutyl phosphate and 5-amino-6-(D-ribitylamino)uracil: step 1/2. In terms of biological role, catalyzes the formation of 6,7-dimethyl-8-ribityllumazine by condensation of 5-amino-6-(D-ribitylamino)uracil with 3,4-dihydroxy-2-butanone 4-phosphate. This is the penultimate step in the biosynthesis of riboflavin. In Shewanella sediminis (strain HAW-EB3), this protein is 6,7-dimethyl-8-ribityllumazine synthase.